The primary structure comprises 798 residues: Copalyl diphosphate synthase 1, chloroplastic (798 aa).

Residues 1–72 constitute a chloroplast transit peptide; the sequence is MASLSTMHLI…SKVAGINRVA (72 aa). Substrate is bound at residue lysine 251. The Mg(2+) site is built by aspartate 383 and aspartate 385. Residues 383–386 carry the DXDD motif motif; sequence DIDD. Lysine 469 is a binding site for substrate.

This sequence belongs to the terpene synthase family. Tpsc subfamily. Mg(2+) serves as cofactor. In terms of tissue distribution, highly expressed in roots, and, at low levels, in stems and leaves.

The protein localises to the plastid. Its subcellular location is the chloroplast. It carries out the reaction (2E,6E,10E)-geranylgeranyl diphosphate = (+)-copalyl diphosphate. Its pathway is secondary metabolite biosynthesis; terpenoid biosynthesis. Involved in the biosynthesis of ent-kaurene diterpenoids natural products such as oridonin, miltiradiene, eriocalyxin B and nezukol, known to exhibit antitumor, anti-inflammatory and antibacterial activities. Catalyzes the conversion of (2E,6E,10E)-geranylgeranyl diphosphate (GGPP) to (+)-copalyl diphosphate ((+)-CPP). The chain is Copalyl diphosphate synthase 1, chloroplastic from Isodon rubescens (Rabdosia rubescens).